Reading from the N-terminus, the 332-residue chain is 3-dehydroquinate synthase (332 aa).

NAD(+) contacts are provided by residues 55-60 (DGEEYK), 89-93 (GVITD), 113-114 (TT), K126, K134, and 152-155 (TLST). E167, H226, and H242 together coordinate Zn(2+).

The protein belongs to the sugar phosphate cyclases superfamily. Dehydroquinate synthase family. NAD(+) is required as a cofactor. Co(2+) serves as cofactor. The cofactor is Zn(2+).

The protein localises to the cytoplasm. The catalysed reaction is 7-phospho-2-dehydro-3-deoxy-D-arabino-heptonate = 3-dehydroquinate + phosphate. Its pathway is metabolic intermediate biosynthesis; chorismate biosynthesis; chorismate from D-erythrose 4-phosphate and phosphoenolpyruvate: step 2/7. Its function is as follows. Catalyzes the conversion of 3-deoxy-D-arabino-heptulosonate 7-phosphate (DAHP) to dehydroquinate (DHQ). This chain is 3-dehydroquinate synthase, found in Pyrococcus abyssi (strain GE5 / Orsay).